An 82-amino-acid polypeptide reads, in one-letter code: DNA-directed RNA polymerase subunit Rpo5 (82 aa).

It belongs to the archaeal Rpo5/eukaryotic RPB5 RNA polymerase subunit family. As to quaternary structure, part of the RNA polymerase complex.

It is found in the cytoplasm. It catalyses the reaction RNA(n) + a ribonucleoside 5'-triphosphate = RNA(n+1) + diphosphate. In terms of biological role, DNA-dependent RNA polymerase (RNAP) catalyzes the transcription of DNA into RNA using the four ribonucleoside triphosphates as substrates. This chain is DNA-directed RNA polymerase subunit Rpo5, found in Thermococcus kodakarensis (strain ATCC BAA-918 / JCM 12380 / KOD1) (Pyrococcus kodakaraensis (strain KOD1)).